The primary structure comprises 1299 residues: DNA-directed RNA polymerase subunit beta' (1299 aa).

Residues Cys60, Cys62, Cys75, and Cys78 each coordinate Zn(2+). The segment at 188-209 is disordered; sequence GAKSDQKRRAKDGAEKEMGQTR. Mg(2+) contacts are provided by Asp535, Asp537, and Asp539. Residues Cys882, Cys959, Cys966, and Cys969 each contribute to the Zn(2+) site.

The protein belongs to the RNA polymerase beta' chain family. In terms of assembly, the RNAP catalytic core consists of 2 alpha, 1 beta, 1 beta' and 1 omega subunit. When a sigma factor is associated with the core the holoenzyme is formed, which can initiate transcription. Mg(2+) serves as cofactor. It depends on Zn(2+) as a cofactor.

The catalysed reaction is RNA(n) + a ribonucleoside 5'-triphosphate = RNA(n+1) + diphosphate. DNA-dependent RNA polymerase catalyzes the transcription of DNA into RNA using the four ribonucleoside triphosphates as substrates. The polypeptide is DNA-directed RNA polymerase subunit beta' (Clavibacter michiganensis subsp. michiganensis (strain NCPPB 382)).